We begin with the raw amino-acid sequence, 281 residues long: Urease accessory protein UreD 2 (281 aa).

Belongs to the UreD family. UreD, UreF and UreG form a complex that acts as a GTP-hydrolysis-dependent molecular chaperone, activating the urease apoprotein by helping to assemble the nickel containing metallocenter of UreC. The UreE protein probably delivers the nickel.

Its subcellular location is the cytoplasm. Functionally, required for maturation of urease via the functional incorporation of the urease nickel metallocenter. In Pseudomonas syringae pv. syringae (strain B728a), this protein is Urease accessory protein UreD 2.